The primary structure comprises 196 residues: MAPQIDAVILAGGMARRMGGNDKGLVDLNGQAMICHTINKLSTQVDQILINANRNQAQYEQWGYTVFSDQDSGYLGPLAGMVTALKQTQADYLLVVPCDCPMLPTDLTARLLAALEQQQADLAVASDGEYEQPVVLLLKPHLAASMQAFLDAGERKIDFWYRQHKVAVESFADQPNAFVNINTPEQKQQLATQIAK.

GTP is bound by residues 10–12, lysine 23, asparagine 51, aspartate 69, and aspartate 99; that span reads LAG. Aspartate 99 is a Mg(2+) binding site.

The protein belongs to the MobA family. As to quaternary structure, monomer. It depends on Mg(2+) as a cofactor.

It is found in the cytoplasm. The enzyme catalyses Mo-molybdopterin + GTP + H(+) = Mo-molybdopterin guanine dinucleotide + diphosphate. In terms of biological role, transfers a GMP moiety from GTP to Mo-molybdopterin (Mo-MPT) cofactor (Moco or molybdenum cofactor) to form Mo-molybdopterin guanine dinucleotide (Mo-MGD) cofactor. This is Molybdenum cofactor guanylyltransferase from Shewanella frigidimarina (strain NCIMB 400).